A 319-amino-acid chain; its full sequence is Probable cell division protein WhiA (319 aa).

Positions 278-311 (SLKELGQMLNPPVGKSGVNHRLRRLESLAEAFSR) form a DNA-binding region, H-T-H motif.

Belongs to the WhiA family.

In terms of biological role, involved in cell division and chromosome segregation. This Heliobacterium modesticaldum (strain ATCC 51547 / Ice1) protein is Probable cell division protein WhiA.